We begin with the raw amino-acid sequence, 119 residues long: Flagellar transcriptional regulator FlhD (119 aa).

The protein belongs to the FlhD family. In terms of assembly, homodimer; disulfide-linked. Forms a heterohexamer composed of two FlhC and four FlhD subunits. Each FlhC binds a FlhD dimer, forming a heterotrimer, and a hexamer assembles by dimerization of two heterotrimers.

It localises to the cytoplasm. Functions in complex with FlhC as a master transcriptional regulator that regulates transcription of several flagellar and non-flagellar operons by binding to their promoter region. Activates expression of class 2 flagellar genes, including fliA, which is a flagellum-specific sigma factor that turns on the class 3 genes. Also regulates genes whose products function in a variety of physiological pathways. This chain is Flagellar transcriptional regulator FlhD, found in Yersinia enterocolitica.